Consider the following 209-residue polypeptide: V-type ATP synthase subunit D (209 aa).

Belongs to the V-ATPase D subunit family.

Its function is as follows. Produces ATP from ADP in the presence of a proton gradient across the membrane. This is V-type ATP synthase subunit D from Anaeromyxobacter sp. (strain K).